Consider the following 428-residue polypeptide: Enolase (428 aa).

Glutamine 162 provides a ligand contact to (2R)-2-phosphoglycerate. The active-site Proton donor is the glutamate 204. Residues aspartate 241, glutamate 288, and aspartate 315 each coordinate Mg(2+). Residues lysine 340, arginine 369, serine 370, and lysine 391 each coordinate (2R)-2-phosphoglycerate. The active-site Proton acceptor is the lysine 340.

Belongs to the enolase family. It depends on Mg(2+) as a cofactor.

The protein resides in the cytoplasm. Its subcellular location is the secreted. The protein localises to the cell surface. The catalysed reaction is (2R)-2-phosphoglycerate = phosphoenolpyruvate + H2O. It functions in the pathway carbohydrate degradation; glycolysis; pyruvate from D-glyceraldehyde 3-phosphate: step 4/5. Catalyzes the reversible conversion of 2-phosphoglycerate (2-PG) into phosphoenolpyruvate (PEP). It is essential for the degradation of carbohydrates via glycolysis. The protein is Enolase of Azobacteroides pseudotrichonymphae genomovar. CFP2.